The sequence spans 31 residues: Ice-structuring glycoprotein 3 (31 aa).

T3, T6, T9, T12, T15, T18, T21, T24, T27, and T30 each carry an O-linked (GalNAc...) threonine glycan.

Post-translationally, O-linked glycans consist of Gal-GalNAc disaccharides. The three proteins may differ only in the number of repeating units of -Ala-Ala-Thr-.

It is found in the secreted. Antifreeze proteins lower the blood freezing point. This fish lives in antarctic waters where it experiences water temperatures near -1.9 degrees Celsius. Its blood has a freezing point of about -2.0 degrees Celsius, and 30% of the freezing-point depression is due mainly to the 3 major high molecular weight glycoproteins in the plasma. The polypeptide is Ice-structuring glycoprotein 3 (Pagothenia borchgrevinki (Bald rockcod)).